The chain runs to 294 residues: UDP-3-O-acyl-N-acetylglucosamine deacetylase (294 aa).

Zn(2+) contacts are provided by His75, His232, and Asp236. The Proton donor role is filled by His259.

This sequence belongs to the LpxC family. Zn(2+) is required as a cofactor.

It carries out the reaction a UDP-3-O-[(3R)-3-hydroxyacyl]-N-acetyl-alpha-D-glucosamine + H2O = a UDP-3-O-[(3R)-3-hydroxyacyl]-alpha-D-glucosamine + acetate. The protein operates within glycolipid biosynthesis; lipid IV(A) biosynthesis; lipid IV(A) from (3R)-3-hydroxytetradecanoyl-[acyl-carrier-protein] and UDP-N-acetyl-alpha-D-glucosamine: step 2/6. Functionally, catalyzes the hydrolysis of UDP-3-O-myristoyl-N-acetylglucosamine to form UDP-3-O-myristoylglucosamine and acetate, the committed step in lipid A biosynthesis. This is UDP-3-O-acyl-N-acetylglucosamine deacetylase from Campylobacter jejuni subsp. jejuni serotype O:2 (strain ATCC 700819 / NCTC 11168).